The following is an 81-amino-acid chain: Large ribosomal subunit protein bL27 (81 aa).

Residues 1–11 (MATSKSGGSSK) show a composition bias toward polar residues. Residues 1–26 (MATSKSGGSSKNGRDSISKRLGVKRS) form a disordered region.

Belongs to the bacterial ribosomal protein bL27 family.

The sequence is that of Large ribosomal subunit protein bL27 from Borrelia turicatae (strain 91E135).